We begin with the raw amino-acid sequence, 298 residues long: Ketohexokinase (298 aa).

Positions 15, 41, 42, and 45 each coordinate beta-D-fructose. ATP is bound by residues Arg-108, 226–229 (AEEG), and 255–258 (GAGD). Residue Asp-258 participates in beta-D-fructose binding.

The protein belongs to the carbohydrate kinase PfkB family. Homodimer. In terms of tissue distribution, most abundant in liver, kidney, gut, spleen and pancreas. Low levels also found in adrenal, muscle, brain and eye.

The enzyme catalyses beta-D-fructose + ATP = beta-D-fructose 1-phosphate + ADP + H(+). The protein operates within carbohydrate metabolism; fructose metabolism. Its activity is regulated as follows. Requires potassium. Inhibition by ADP. Catalyzes the phosphorylation of the ketose sugar fructose to fructose-1-phosphate. The chain is Ketohexokinase from Homo sapiens (Human).